The chain runs to 49 residues: Large ribosomal subunit protein bL33B (49 aa).

This sequence belongs to the bacterial ribosomal protein bL33 family.

In terms of biological role, plays a role in sporulation at high temperatures. The sequence is that of Large ribosomal subunit protein bL33B (rpmGB) from Bacillus subtilis (strain 168).